The chain runs to 532 residues: Sodium-dependent lysophosphatidylcholine symporter 1-A (532 aa).

Residues Met1–Ala40 lie on the Cytoplasmic side of the membrane. A helical transmembrane segment spans residues Leu41–Phe70. The Extracellular segment spans residues Leu71–Asn81. The chain crosses the membrane as a helical span at residues Ala82 to Phe102. At Leu103–Arg114 the chain is on the cytoplasmic side. The chain crosses the membrane as a helical span at residues Met115–Trp134. The Extracellular portion of the chain corresponds to Val135–Met144. A helical transmembrane segment spans residues Met145 to Thr169. The Cytoplasmic segment spans residues Met170–Gln176. Residues Arg177–Ala208 traverse the membrane as a helical segment. The Extracellular segment spans residues Asn209–His232. Cys212 and Cys464 are oxidised to a cystine. N-linked (GlcNAc...) asparagine glycans are attached at residues Asn214, Asn220, and Asn229. Residues Ile233–Phe266 form a helical membrane-spanning segment. Residues Gly267–Pro297 lie on the Cytoplasmic side of the membrane. A helical membrane pass occupies residues Tyr298–Lys324. At Tyr325 to Asn335 the chain is on the extracellular side. The helical transmembrane segment at Ile336–Phe354 threads the bilayer. Over Leu355–Phe358 the chain is Cytoplasmic. The chain crosses the membrane as a helical span at residues Gly359–Ser380. The Extracellular segment spans residues Val381–Ser383. Residues Ser384–Gln420 form a helical membrane-spanning segment. At Asn421–Ile430 the chain is on the cytoplasmic side. Residues Phe431 to Ala457 form a helical membrane-spanning segment. The Extracellular portion of the chain corresponds to Gly458–Ser469. A helical membrane pass occupies residues Val470–Phe493. Topologically, residues Met494 to Ala532 are cytoplasmic.

The protein belongs to the major facilitator superfamily. In terms of tissue distribution, expressed in the developing nervous system.

It is found in the cell membrane. The protein resides in the endoplasmic reticulum membrane. The catalysed reaction is a 1-acyl-sn-glycero-3-phosphocholine(in) + Na(+)(in) = a 1-acyl-sn-glycero-3-phosphocholine(out) + Na(+)(out). It carries out the reaction 1-(4Z,7Z,10Z,13Z,16Z,19Z-docosahexaenoyl)-sn-glycero-3-phosphocholine(in) + Na(+)(in) = 1-(4Z,7Z,10Z,13Z,16Z,19Z-docosahexaenoyl)-sn-glycero-3-phosphocholine(out) + Na(+)(out). The enzyme catalyses 1-(9Z-octadecenoyl)-sn-glycero-3-phosphocholine(in) + Na(+)(in) = 1-(9Z-octadecenoyl)-sn-glycero-3-phosphocholine(out) + Na(+)(out). It catalyses the reaction 1-hexadecanoyl-sn-glycero-3-phosphocholine(in) + Na(+)(in) = 1-hexadecanoyl-sn-glycero-3-phosphocholine(out) + Na(+)(out). The catalysed reaction is a 1-acyl-sn-glycero-3-phosphoethanolamine(in) + Na(+)(in) = a 1-acyl-sn-glycero-3-phosphoethanolamine(out) + Na(+)(out). Sodium-dependent lysophosphatidylcholine (LPC) symporter, which plays an essential role for blood-brain barrier formation and function. Specifically expressed in endothelium of the blood-brain barrier of micro-vessels and transports LPC into the brain. Transport of LPC is essential because it constitutes the major mechanism by which docosahexaenoic acid (DHA), an omega-3 fatty acid that is essential for normal brain growth and cognitive function, enters the brain. Transports LPC carrying long-chain fatty acids such LPC oleate and LPC palmitate with a minimum acyl chain length of 14 carbons. Does not transport docosahexaenoic acid in unesterified fatty acid. This is Sodium-dependent lysophosphatidylcholine symporter 1-A (mfsd2aa) from Danio rerio (Zebrafish).